The following is a 901-amino-acid chain: Serine/threonine-protein kinase-like protein CR4 (901 aa).

Residues Met-1 to Gly-22 form the signal peptide. Tandem repeats lie at residues Val-31–Ser-66, Phe-70–Gln-105, Leu-123–Gly-158, Val-160–Gly-193, Phe-201–Thr-234, Met-251–Pro-285, and Val-290–Pro-328. The tract at residues Val-31 to Pro-328 is 7 X 36 AA repeats. 2 N-linked (GlcNAc...) asparagine glycosylation sites follow: Asn-149 and Asn-177. Residue Asn-280 is glycosylated (N-linked (GlcNAc...) asparagine). The TNFR-Cys repeat unit spans residues Ser-335–Cys-389. 3 disulfide bridges follow: Cys-336/Cys-364, Cys-367/Cys-381, and Cys-371/Cys-389. N-linked (GlcNAc...) asparagine glycosylation occurs at Asn-382. The chain crosses the membrane as a helical span at residues Ile-423–Cys-443. One can recognise a Protein kinase domain in the interval Phe-504–Leu-781. Residues Val-510 to Val-518 and Lys-532 each bind ATP. Asp-633 functions as the Proton acceptor in the catalytic mechanism. The interval Val-845–Phe-901 is disordered. A compositionally biased stretch (polar residues) spans Ala-889–Phe-901.

It belongs to the protein kinase superfamily. Ser/Thr protein kinase family. Homodimer. In terms of processing, autophosphorylated. Specifically expressed in the epidermal cells of paleas and lemmas.

The protein localises to the cell membrane. It localises to the endosome. The protein resides in the multivesicular body membrane. The enzyme catalyses L-seryl-[protein] + ATP = O-phospho-L-seryl-[protein] + ADP + H(+). The catalysed reaction is L-threonyl-[protein] + ATP = O-phospho-L-threonyl-[protein] + ADP + H(+). In terms of biological role, receptor protein kinase. Could play a role in a differentiation signal. Controls formative cell division in meristems. Regulates epidermal cell differentiation in many organs. During floral organogenesis, required to maintain the interlocking of the palea and lemma, and fertility. Triggers culm elongation. The polypeptide is Serine/threonine-protein kinase-like protein CR4 (Oryza sativa subsp. japonica (Rice)).